The primary structure comprises 205 residues: Holliday junction branch migration complex subunit RuvA (205 aa).

The tract at residues 1–64 (MIGKLRGLID…EDQIKLFGFR (64 aa)) is domain I. Positions 65-143 (SDVEREWFRL…AFANVDPGVV (79 aa)) are domain II. The tract at residues 144–154 (RLSGAIEESRA) is flexible linker. A domain III region spans residues 154-205 (APQPVADAISALINLGYGQPQAAAAIAAASRAAGDKAETAQLIRLGLKELAK).

This sequence belongs to the RuvA family. As to quaternary structure, homotetramer. Forms an RuvA(8)-RuvB(12)-Holliday junction (HJ) complex. HJ DNA is sandwiched between 2 RuvA tetramers; dsDNA enters through RuvA and exits via RuvB. An RuvB hexamer assembles on each DNA strand where it exits the tetramer. Each RuvB hexamer is contacted by two RuvA subunits (via domain III) on 2 adjacent RuvB subunits; this complex drives branch migration. In the full resolvosome a probable DNA-RuvA(4)-RuvB(12)-RuvC(2) complex forms which resolves the HJ.

Its subcellular location is the cytoplasm. Functionally, the RuvA-RuvB-RuvC complex processes Holliday junction (HJ) DNA during genetic recombination and DNA repair, while the RuvA-RuvB complex plays an important role in the rescue of blocked DNA replication forks via replication fork reversal (RFR). RuvA specifically binds to HJ cruciform DNA, conferring on it an open structure. The RuvB hexamer acts as an ATP-dependent pump, pulling dsDNA into and through the RuvAB complex. HJ branch migration allows RuvC to scan DNA until it finds its consensus sequence, where it cleaves and resolves the cruciform DNA. The protein is Holliday junction branch migration complex subunit RuvA of Bradyrhizobium sp. (strain ORS 278).